The sequence spans 339 residues: Dihydroorotate dehydrogenase (quinone) (339 aa).

Residues 64 to 68 (AGADK) and Thr88 each bind FMN. Lys68 is a binding site for substrate. A substrate-binding site is contributed by 113-117 (NRNGF). Positions 141 and 174 each coordinate FMN. Asn174 lines the substrate pocket. The Nucleophile role is filled by Ser177. Asn179 provides a ligand contact to substrate. Residues Lys219 and Thr247 each contribute to the FMN site. Substrate is bound at residue 248-249 (NT). Residues Gly270, Gly299, and 320–321 (YS) contribute to the FMN site.

It belongs to the dihydroorotate dehydrogenase family. Type 2 subfamily. In terms of assembly, monomer. FMN is required as a cofactor.

Its subcellular location is the cell membrane. It carries out the reaction (S)-dihydroorotate + a quinone = orotate + a quinol. Its pathway is pyrimidine metabolism; UMP biosynthesis via de novo pathway; orotate from (S)-dihydroorotate (quinone route): step 1/1. Its function is as follows. Catalyzes the conversion of dihydroorotate to orotate with quinone as electron acceptor. The protein is Dihydroorotate dehydrogenase (quinone) of Haemophilus influenzae (strain PittGG).